The following is a 201-amino-acid chain: Large ribosomal subunit protein uL4 (201 aa).

The segment at 46–71 is disordered; sequence QKTRAEITGSGKKPWRQKGTGRARSG.

Belongs to the universal ribosomal protein uL4 family. In terms of assembly, part of the 50S ribosomal subunit.

In terms of biological role, one of the primary rRNA binding proteins, this protein initially binds near the 5'-end of the 23S rRNA. It is important during the early stages of 50S assembly. It makes multiple contacts with different domains of the 23S rRNA in the assembled 50S subunit and ribosome. Forms part of the polypeptide exit tunnel. This is Large ribosomal subunit protein uL4 from Klebsiella pneumoniae (strain 342).